Here is a 346-residue protein sequence, read N- to C-terminus: Uroporphyrinogen decarboxylase (346 aa).

Substrate-binding positions include arginine 21–arginine 25, phenylalanine 40, aspartate 71, tyrosine 146, serine 201, and histidine 316.

This sequence belongs to the uroporphyrinogen decarboxylase family. As to quaternary structure, homodimer.

It localises to the cytoplasm. The enzyme catalyses uroporphyrinogen III + 4 H(+) = coproporphyrinogen III + 4 CO2. The protein operates within porphyrin-containing compound metabolism; protoporphyrin-IX biosynthesis; coproporphyrinogen-III from 5-aminolevulinate: step 4/4. Functionally, catalyzes the decarboxylation of four acetate groups of uroporphyrinogen-III to yield coproporphyrinogen-III. The polypeptide is Uroporphyrinogen decarboxylase (Rickettsia felis (strain ATCC VR-1525 / URRWXCal2) (Rickettsia azadi)).